Here is a 161-residue protein sequence, read N- to C-terminus: MPSMDIVSEVNEVELRNAVDNTRRELDSRFDFRGVESEVSYKDHQVTLSSESDFQCQQMVDMLRNQLSKRNVDPASMDVAEKAIHSGKTFSLKVTFKEGIDSLVAKKLVKLIKDSKLKVQAAIQGDSIRVTGKKRDDLQAVMAIARESDLGQPFQFNNFRD.

The protein belongs to the YajQ family.

Functionally, nucleotide-binding protein. This chain is Nucleotide-binding protein Shew_2893, found in Shewanella loihica (strain ATCC BAA-1088 / PV-4).